The chain runs to 347 residues: Homeobox protein knotted-1-like 9 (347 aa).

A compositionally biased stretch (low complexity) spans 1 to 17 (MESFASLAGGGSSSTTA). Disordered stretches follow at residues 1 to 36 (MESF…PPPL), 122 to 145 (QQLD…DVPD), and 179 to 206 (DSNC…DPSD). Positions 22 to 36 (LIPPENPDRISPPPL) are enriched in pro residues. The span at 188–203 (SEEEQDTSCPEAEEID) shows a compositional bias: acidic residues. Residues 208–228 (QLKHQLLMKYGGSLGDLRQAF) enclose the ELK domain. The segment at residues 229–293 (SKRTKKGKLP…NQRKRHWKPT (65 aa)) is a DNA-binding region (homeobox; TALE-type).

It belongs to the TALE/KNOX homeobox family.

The protein resides in the nucleus. This Oryza sativa subsp. japonica (Rice) protein is Homeobox protein knotted-1-like 9.